The following is a 139-amino-acid chain: Natriuretic peptide Mf-NP (139 aa).

The first 25 residues, 1-25 (MVGLSRLTGGGLLLVLALLPLALDG), serve as a signal peptide directing secretion. Positions 26–75 (KPLEEAPTAPSRIIPFSRPVRKESQAVLDPMVHPERPAGSGDDGDLSRLE) are excised as a propeptide. A disulfide bridge connects residues Cys-86 and Cys-102. A propeptide spanning residues 117–139 (IIPFSRPVRKESRAALDRMQHPG) is cleaved from the precursor.

The protein belongs to the natriuretic peptide family. Expressed by the venom gland.

Its subcellular location is the secreted. Functionally, natriuretic peptide that dose-dependently induces the rapid relaxation of rat aortic strips phenylephrine-precontracted. Acts by stimulating cGMP production in a dose-dependent manner (by probably activating NPR1 and/or NPR2). May also show potent hypotensive effects. In Micrurus fulvius (Eastern coral snake), this protein is Natriuretic peptide Mf-NP.